The primary structure comprises 125 residues: Putative superoxide reductase (125 aa).

Residues Glu12, His14, His40, His46, Cys110, and His113 each coordinate Fe cation.

This sequence belongs to the desulfoferrodoxin family. The cofactor is Fe cation.

It catalyses the reaction reduced [rubredoxin] + superoxide + 2 H(+) = oxidized [rubredoxin] + H2O2. Uses electrons from reduced NADP, by way of rubredoxin and an oxidoreductase, to catalyze the reduction of superoxide to hydrogen peroxide. This is Putative superoxide reductase from Archaeoglobus fulgidus (strain ATCC 49558 / DSM 4304 / JCM 9628 / NBRC 100126 / VC-16).